Reading from the N-terminus, the 1528-residue chain is Zinc finger FYVE domain-containing protein 16 (1528 aa).

Serine 120 is subject to Phosphoserine. Positions 629-664 (TQAVGGARPKQLLSLPPGTRSSKELNKPDVVDVPES) are disordered. The segment covering 649–658 (SSKELNKPDV) has biased composition (basic and acidic residues). The segment at 735–793 (DSEAPNCMNCQVKFTFTKRRHHCRACGKVFCGVCCNRKCKLQYLEKEARVCVICYETIN) adopts an FYVE-type zinc-finger fold. Zn(2+) is bound by residues cysteine 741, cysteine 744, cysteine 757, cysteine 760, cysteine 765, cysteine 768, cysteine 785, and cysteine 788. Serine 803, serine 833, serine 884, and serine 927 each carry phosphoserine. The tract at residues 819-849 (TDQPLQETQTSSTPSPTTLPISALKQPNVEG) is disordered. The span at 821–838 (QPLQETQTSSTPSPTTLP) shows a compositional bias: low complexity. The tract at residues 928–949 (PTCHTAPVERLPGNTGTEGLPM) is disordered.

In terms of assembly, interacts (via C-terminus) with TOM1 (via C-terminus); interaction is required to target TOM1 to endosomes. Does not interact with TOM1L1 or TOM1L2.

It is found in the cytoplasm. The protein localises to the early endosome membrane. Functionally, may be involved in regulating membrane trafficking in the endosomal pathway. Overexpression induces endosome aggregation. Required to target TOM1 to endosomes. This chain is Zinc finger FYVE domain-containing protein 16 (Zfyve16), found in Mus musculus (Mouse).